Here is a 1010-residue protein sequence, read N- to C-terminus: Polyhomeotic-like protein 1 (1010 aa).

The segment covering 1–22 (METESEQNSSSTNGSSSSGASS) has biased composition (low complexity). 6 disordered regions span residues 1-25 (METESEQNSSSTNGSSSSGASSRPQ), 212-243 (NQQASAQGPQMPGSTQKAIPPGASPVSGLSQT), 259-312 (GQSL…TGVV), 444-506 (QQQG…SKPP), 565-588 (GAVQPGQAHLASSPPSSQAAPGAL), and 646-678 (KRKAESEEERDDLSALASVLPTKASPAAESPKV). Over residues 212 to 228 (NQQASAQGPQMPGSTQK) the composition is skewed to polar residues. The span at 279-292 (MGPGGGGQAPGGLG) shows a compositional bias: gly residues. Over residues 453–463 (PQPPQVPPTQQ) the composition is skewed to pro residues. The segment covering 464 to 480 (VPPSQSQQQAQTLVVQP) has biased composition (low complexity). Over residues 488-500 (TLPPEPTSKPPIP) the composition is skewed to pro residues. Positions 575–587 (ASSPPSSQAAPGA) are enriched in low complexity. Ser-651 carries the post-translational modification Phosphoserine. Lys-769 is covalently cross-linked (Glycyl lysine isopeptide (Lys-Gly) (interchain with G-Cter in SUMO2)). Residues 772 to 794 (QAGLPTGLNESQPSGPLGGDSPS) form a disordered region. Residues 797–831 (LEKKANLLKCEYCGKYAPAEQFRGSKRFCSMTCAK) form an FCS-type zinc finger. Zn(2+) is bound by residues Cys-806, Cys-809, Cys-825, and Cys-829. The interval 854-928 (ASYARVRRRG…LGNTITTPST (75 aa)) is disordered. The residue at position 904 (Ser-904) is a Phosphoserine. Thr-928 is modified (phosphothreonine). Residues 946–1010 (WSVEEVYEFI…CAKINVLKET (65 aa)) form the SAM domain.

In terms of assembly, homodimer. Component of a PRC1-like complex. Interacts with the SAM domain of SCMH1 via its SAM domain in vitro. Interacts with RNF2 and CBX7. Interacts with PHC2. Interacts with BMI1. Highly expressed in testis with lower levels in most other tissues. Expressed in embryonic stem cells.

The protein resides in the nucleus. Its function is as follows. Component of a Polycomb group (PcG) multiprotein PRC1-like complex, a complex class required to maintain the transcriptionally repressive state of many genes, including Hox genes, throughout development. PcG PRC1 complex acts via chromatin remodeling and modification of histones; it mediates monoubiquitination of histone H2A 'Lys-119', rendering chromatin heritably changed in its expressibility. Required for proper control of cellular levels of GMNN expression. The polypeptide is Polyhomeotic-like protein 1 (Mus musculus (Mouse)).